Consider the following 238-residue polypeptide: 3-dehydroquinate dehydratase (238 aa).

3-dehydroquinate-binding positions include 35–37 (ELR) and Arg70. His133 acts as the Proton donor/acceptor in catalysis. Catalysis depends on Lys160, which acts as the Schiff-base intermediate with substrate. Positions 202 and 225 each coordinate 3-dehydroquinate.

Belongs to the type-I 3-dehydroquinase family. Homodimer.

It carries out the reaction 3-dehydroquinate = 3-dehydroshikimate + H2O. It functions in the pathway metabolic intermediate biosynthesis; chorismate biosynthesis; chorismate from D-erythrose 4-phosphate and phosphoenolpyruvate: step 3/7. Its function is as follows. Involved in the third step of the chorismate pathway, which leads to the biosynthesis of aromatic amino acids. Catalyzes the cis-dehydration of 3-dehydroquinate (DHQ) and introduces the first double bond of the aromatic ring to yield 3-dehydroshikimate. In Staphylococcus aureus (strain MSSA476), this protein is 3-dehydroquinate dehydratase.